We begin with the raw amino-acid sequence, 195 residues long: CD70 antigen (195 aa).

The Cytoplasmic segment spans residues 1 to 23 (MPEEGRPCPWVRWSGTAFQRQWP). The chain crosses the membrane as a helical; Signal-anchor for type II membrane protein span at residues 24 to 44 (WLLLVVFITVFCCWFHCSGLL). Residues 45 to 195 (SKQQQRLLEH…TFFGVQWICP (151 aa)) lie on the Extracellular side of the membrane. The THD domain maps to 58-193 (HTAELQLNLT…DETFFGVQWI (136 aa)). Residues asparagine 65 and asparagine 116 are each glycosylated (N-linked (GlcNAc...) asparagine). Disulfide bonds link cysteine 117-cysteine 153 and cysteine 135-cysteine 170. The N-linked (GlcNAc...) asparagine glycan is linked to asparagine 172.

It belongs to the tumor necrosis factor family. As to quaternary structure, homotrimer. Post-translationally, N-glycosylated. In terms of tissue distribution, very low level of expression. Detected in splenocytes and thymocytes.

The protein resides in the cell membrane. Its function is as follows. Expressed at the plasma membrane of B cells, it is the ligand of the CD27 receptor which is specifically expressed at the surface of T cells. The CD70-CD27 signaling pathway mediates antigen-specific T cell activation and expansion which in turn provides immune surveillance of B cells. The sequence is that of CD70 antigen from Mus musculus (Mouse).